We begin with the raw amino-acid sequence, 78 residues long: Esculentin-2Vb (78 aa).

The first 22 residues, Met1–Cys22, serve as a signal peptide directing secretion. Positions Glu23–Met39 are excised as a propeptide. Residues Cys72 and Cys78 are joined by a disulfide bond.

Expressed by the skin glands.

Its subcellular location is the secreted. Antimicrobial peptide. The sequence is that of Esculentin-2Vb from Odorrana versabilis (Chinese bamboo leaf odorous frog).